The following is a 162-amino-acid chain: MDQTQYILNKKLVEFLLYSNQDCSLIVIDALITIGANVNYIDETNYNDTPILSVITKTSESNPETVKLLLDKGADVNYQNKYHETALMRTIKYGNFGIAKILLDYGANPYLLDYKNRNSIMIAKEFNVIPMLNIINLYDKKNKDNSDKIRLEIDRIVNIFVD.

3 ANK repeats span residues K10–Y40, N47–Y78, and Y82–L111.

The polypeptide is Putative ankyrin repeat protein R664 (Acanthamoeba polyphaga mimivirus (APMV)).